Here is a 156-residue protein sequence, read N- to C-terminus: Small ribosomal subunit protein uS7 (156 aa).

This sequence belongs to the universal ribosomal protein uS7 family. In terms of assembly, part of the 30S ribosomal subunit. Contacts proteins S9 and S11.

One of the primary rRNA binding proteins, it binds directly to 16S rRNA where it nucleates assembly of the head domain of the 30S subunit. Is located at the subunit interface close to the decoding center, probably blocks exit of the E-site tRNA. This is Small ribosomal subunit protein uS7 from Lacticaseibacillus casei (strain BL23) (Lactobacillus casei).